Here is a 511-residue protein sequence, read N- to C-terminus: Cytochrome P450 76C4 (511 aa).

The chain crosses the membrane as a helical span at residues 3 to 23 (IISGQALFLLFCFISSCFLIS). Position 450 (Cys-450) interacts with heme.

This sequence belongs to the cytochrome P450 family. Heme serves as cofactor.

It localises to the membrane. The sequence is that of Cytochrome P450 76C4 (CYP76C4) from Arabidopsis thaliana (Mouse-ear cress).